Consider the following 180-residue polypeptide: MKLLLLSMGLALVCGLQPECSRSEEDLSDEKERKWEQLSRHWHTVVLASSDRSLIEEEGPFRNFIQNITVESGNLNGFFLTRKNGQCIPLYLTAFKTEEARQFKLNYYGTNDVYYGSSKPNEYAKFIFYNYHDGKVNVVANLFGRTPNLSNEIKKRFEEDFMNRGFRRENILDISEVDHC.

The first 15 residues, 1-15 (MKLLLLSMGLALVCG), serve as a signal peptide directing secretion. 2 N-linked (GlcNAc...) asparagine glycosylation sites follow: Asn-67 and Asn-148. A disulfide bond links Cys-87 and Cys-180.

It belongs to the calycin superfamily. Lipocalin family. Homodimer. As to expression, milk.

The protein localises to the secreted. This Trichosurus vulpecula (Brush-tailed possum) protein is Trichosurin.